Reading from the N-terminus, the 168-residue chain is Phosphopantetheine adenylyltransferase (168 aa).

Position 10 (T10) interacts with substrate. Residues 10–11 (TF) and H18 each bind ATP. Residues K42, L75, and R89 each contribute to the substrate site. Residues 90-92 (GVR), E100, and 125-131 (YTYVASS) each bind ATP.

It belongs to the bacterial CoaD family. In terms of assembly, homohexamer. It depends on Mg(2+) as a cofactor.

It is found in the cytoplasm. The catalysed reaction is (R)-4'-phosphopantetheine + ATP + H(+) = 3'-dephospho-CoA + diphosphate. The protein operates within cofactor biosynthesis; coenzyme A biosynthesis; CoA from (R)-pantothenate: step 4/5. In terms of biological role, reversibly transfers an adenylyl group from ATP to 4'-phosphopantetheine, yielding dephospho-CoA (dPCoA) and pyrophosphate. The sequence is that of Phosphopantetheine adenylyltransferase from Prosthecochloris aestuarii (strain DSM 271 / SK 413).